The following is a 144-amino-acid chain: Large ribosomal subunit protein uL15 (144 aa).

Over residues 1-14 the composition is skewed to basic and acidic residues; the sequence is MKLHELKPNEGARD. A disordered region spans residues 1–43; sequence MKLHELKPNEGARDVRKRVGRGTSSGTGKTAGRGQKGQKARSK. Positions 23 to 35 are enriched in gly residues; sequence TSSGTGKTAGRGQ.

It belongs to the universal ribosomal protein uL15 family. In terms of assembly, part of the 50S ribosomal subunit.

Its function is as follows. Binds to the 23S rRNA. In Latilactobacillus sakei subsp. sakei (strain 23K) (Lactobacillus sakei subsp. sakei), this protein is Large ribosomal subunit protein uL15.